Consider the following 556-residue polypeptide: Set1/Ash2 histone methyltransferase complex subunit ASH2 (556 aa).

Residues Met1–Asn19 show a composition bias toward polar residues. The segment at Met1–Ser27 is disordered. The PHD-type zinc-finger motif lies at Ala34–Ser90. Cys37, Cys39, Cys52, Cys55, His60, Cys63, Cys84, and Cys87 together coordinate Zn(2+). A disordered region spans residues Ala216–Lys251. The 223-residue stretch at Ser288–Lys510 folds into the B30.2/SPRY domain.

As to quaternary structure, core component of several methyltransferase-containing complexes. Component of the SET1C/COMPASS complex, composed at least of the catalytic subunit Set1, wds/WDR5, Wdr82, Rbbp5, ash2, Cfp1/CXXC1, hcf and Dpy-30L1. Component of the MLL3/4 (Histone-lysine N-methyltransferase/demethylase TRR) complex composed at least of the catalytic subunit trr, ash2, Rbbp5, Dpy-30L1, wds, hcf, ptip, Pa1, Utx, Lpt and Ncoa6. Interacts with hcf. Interacts with trr. In terms of assembly, interacts (via B30.2/SPRY domain) with sktl; the interaction is direct. In terms of tissue distribution, in larvae and pupae, expressed in imaginal disks, salivary gland and fat body cells. No expression detected in central nervous system (at protein level).

It localises to the nucleus. The protein localises to the chromosome. Transcriptional regulator. Regulates a number of genes involved in wing development including activation of net and bs and repression of rho and kni and controls vein-intervein patterning during wing development. Required for correct expression of a number of homeotic genes including Scr in the first leg imaginal disk and Ubx in the third leg imaginal disk and haltere disks. Required for stabilization of the histone-lysine N-methyltransferase trr and for trimethylation of 'Lys-4' of histone H3. Together with sktl probably plays a role in maintenance of transcriptionally active chromatin through down-regulation of histone H1 hyperphosphorylation. The chain is Set1/Ash2 histone methyltransferase complex subunit ASH2 from Drosophila melanogaster (Fruit fly).